The following is a 182-amino-acid chain: Cell wall protein phiA (182 aa).

The first 18 residues, 1–18 (MKLTSTAALASLAVAATA), serve as a signal peptide directing secretion. 2 N-linked (GlcNAc...) asparagine glycosylation sites follow: Asn-57 and Asn-107.

Belongs to the phiA family. As to expression, mainly present in phialides and conidia.

The protein resides in the secreted. It localises to the cell wall. Cell wall protein involved in development of asexual structures such as phialide and conidium development, and thus required for spore formation. Plays a role as a general stress protectant produced by the fungus in competition with antagonistic bacteria. This chain is Cell wall protein phiA, found in Emericella nidulans (strain FGSC A4 / ATCC 38163 / CBS 112.46 / NRRL 194 / M139) (Aspergillus nidulans).